The following is a 448-amino-acid chain: Adenylosuccinate synthetase (448 aa).

GTP contacts are provided by residues 36–42 and 64–66; these read GDEGKGK and GHT. The active-site Proton acceptor is the Asp37. Mg(2+)-binding residues include Asp37 and Gly64. IMP is bound by residues 37–40, 62–65, Thr154, Arg168, Asn246, Thr261, and Arg325; these read DEGK and NAGH. His65 serves as the catalytic Proton donor. 321–327 serves as a coordination point for substrate; it reads VTTKRKR. Residues Arg327, 353 to 355, and 436 to 438 contribute to the GTP site; these read KLD and GVG.

This sequence belongs to the adenylosuccinate synthetase family. Homodimer. Mg(2+) serves as cofactor.

It is found in the cytoplasm. The catalysed reaction is IMP + L-aspartate + GTP = N(6)-(1,2-dicarboxyethyl)-AMP + GDP + phosphate + 2 H(+). The protein operates within purine metabolism; AMP biosynthesis via de novo pathway; AMP from IMP: step 1/2. In terms of biological role, plays an important role in the de novo pathway and in the salvage pathway of purine nucleotide biosynthesis. Catalyzes the first committed step in the biosynthesis of AMP from IMP. The sequence is that of Adenylosuccinate synthetase from Drosophila mojavensis (Fruit fly).